A 536-amino-acid polypeptide reads, in one-letter code: Phosphoenolpyruvate carboxykinase (ATP) (536 aa).

Arg-61, Tyr-195, and Lys-201 together coordinate substrate. ATP-binding positions include Lys-201, His-220, and 236 to 244 (GLSGTGKTT). Residues Lys-201 and His-220 each coordinate Mn(2+). Asp-257 contributes to the Mn(2+) binding site. Glu-285, Arg-322, and Thr-447 together coordinate ATP. Arg-322 provides a ligand contact to substrate.

Belongs to the phosphoenolpyruvate carboxykinase (ATP) family. Mn(2+) is required as a cofactor.

The protein resides in the cytoplasm. It carries out the reaction oxaloacetate + ATP = phosphoenolpyruvate + ADP + CO2. Its pathway is carbohydrate biosynthesis; gluconeogenesis. In terms of biological role, involved in the gluconeogenesis. Catalyzes the conversion of oxaloacetate (OAA) to phosphoenolpyruvate (PEP) through direct phosphoryl transfer between the nucleoside triphosphate and OAA. The chain is Phosphoenolpyruvate carboxykinase (ATP) from Mesorhizobium japonicum (strain LMG 29417 / CECT 9101 / MAFF 303099) (Mesorhizobium loti (strain MAFF 303099)).